We begin with the raw amino-acid sequence, 536 residues long: CTP synthase (536 aa).

Residues 1 to 267 (MSKFVFVTGG…CKETLKYLEL (267 aa)) form an amidoligase domain region. CTP is bound at residue Ser13. Residue Ser13 coordinates UTP. ATP-binding positions include 14–19 (SIGKGI) and Asp71. Mg(2+) contacts are provided by Asp71 and Glu141. CTP is bound by residues 148–150 (DIE), 188–193 (KTKPTQ), and Lys224. Residues 188-193 (KTKPTQ) and Lys224 each bind UTP. The Glutamine amidotransferase type-1 domain maps to 292-534 (KVALVGKYIE…IKSSQENLTQ (243 aa)). Gly354 is an L-glutamine binding site. Cys381 serves as the catalytic Nucleophile; for glutamine hydrolysis. L-glutamine-binding positions include 382 to 385 (LGMQ), Glu405, and Arg462. Catalysis depends on residues His507 and Glu509.

The protein belongs to the CTP synthase family. As to quaternary structure, homotetramer.

It catalyses the reaction UTP + L-glutamine + ATP + H2O = CTP + L-glutamate + ADP + phosphate + 2 H(+). The catalysed reaction is L-glutamine + H2O = L-glutamate + NH4(+). It carries out the reaction UTP + NH4(+) + ATP = CTP + ADP + phosphate + 2 H(+). The protein operates within pyrimidine metabolism; CTP biosynthesis via de novo pathway; CTP from UDP: step 2/2. With respect to regulation, allosterically activated by GTP, when glutamine is the substrate; GTP has no effect on the reaction when ammonia is the substrate. The allosteric effector GTP functions by stabilizing the protein conformation that binds the tetrahedral intermediate(s) formed during glutamine hydrolysis. Inhibited by the product CTP, via allosteric rather than competitive inhibition. Its function is as follows. Catalyzes the ATP-dependent amination of UTP to CTP with either L-glutamine or ammonia as the source of nitrogen. Regulates intracellular CTP levels through interactions with the four ribonucleotide triphosphates. The polypeptide is CTP synthase (Prochlorococcus marinus (strain MIT 9312)).